A 106-amino-acid chain; its full sequence is UPF0145 protein Csac_0771 (106 aa).

The protein belongs to the UPF0145 family.

This is UPF0145 protein Csac_0771 from Caldicellulosiruptor saccharolyticus (strain ATCC 43494 / DSM 8903 / Tp8T 6331).